The following is a 190-amino-acid chain: Ribosome hibernation promotion factor (190 aa).

This sequence belongs to the HPF/YfiA ribosome-associated protein family. Long HPF subfamily. As to quaternary structure, interacts with 100S ribosomes.

The protein resides in the cytoplasm. Required for dimerization of active 70S ribosomes into 100S ribosomes in stationary phase; 100S ribosomes are translationally inactive and sometimes present during exponential growth. This is Ribosome hibernation promotion factor from Staphylococcus aureus (strain COL).